Here is a 111-residue protein sequence, read N- to C-terminus: Anti-adapter protein IraM (111 aa).

Belongs to the IraM/RssC family.

It localises to the cytoplasm. Inhibits RpoS proteolysis by regulating RssB activity, thereby increasing the stability of the sigma stress factor RpoS during magnesium starvation. The sequence is that of Anti-adapter protein IraM from Escherichia coli O127:H6 (strain E2348/69 / EPEC).